The chain runs to 233 residues: Large ribosomal subunit protein uL1 (233 aa).

The protein belongs to the universal ribosomal protein uL1 family. As to quaternary structure, part of the 50S ribosomal subunit.

Its function is as follows. Binds directly to 23S rRNA. The L1 stalk is quite mobile in the ribosome, and is involved in E site tRNA release. Protein L1 is also a translational repressor protein, it controls the translation of the L11 operon by binding to its mRNA. The chain is Large ribosomal subunit protein uL1 from Thermotoga petrophila (strain ATCC BAA-488 / DSM 13995 / JCM 10881 / RKU-1).